The primary structure comprises 364 residues: MAARQQQKGTGFGVQYEDFVPKSEWKDQPEATILNIDLTGFAKEQMKVTYVHSSKMIRVTGERPLANRKWSRFNEVFTVPQNCLVDKIHGSFKNNVLTITMPKETITKVAYLPETSRTEAAALEKAAKLEEKRLLEESRRKEKEEEEAKQMKKQLLEEKEALIRKLQEEAKAKEEAEMRKLQEEAKAKEEAAAKKLQEEIEAKEKLEERKLEERRLEERKLEDMNLAEEAKLKKIQERKSVDESGEKEKILKPEVVYTKSGHVATPKPESGSGLKSGFGGVGEVVKSAEEKLGNLVEKEKKMGKGIMEKIRRKEITSEEKKLMMNVGVAALVIFALGAYVSYTFCSSSSSSSSPSSSSSSTKPE.

In terms of domain architecture, sHSP spans 14-121; it reads VQYEDFVPKS…LPETSRTEAA (108 aa). The A-1 repeat unit spans residues 129 to 133; it reads LEEKR. The segment at 129–220 is 6 X 5 AA repeats A of L-E-E-[SKR]-[ERK]; it reads LEEKRLLEES…LEERRLEERK (92 aa). The stretch at 135-139 is one A-2 repeat; sequence LEESR. The stretch at 156–160 is one A-3 repeat; that stretch reads LEEKE. One copy of the B-1 repeat lies at 163-176; it reads IRKLQEEAKAKEEA. Residues 163 to 206 form a 3 X 14 AA repeats B of [IMA]-[RK]-K-L-Q-E-E-A-K-A-K-E-[EK]-[LA] region; that stretch reads IRKLQEEAKAKEEAEMRKLQEEAKAKEEAAAKKLQEEIEAKEKL. The stretch at 178 to 191 is one B-2 repeat; that stretch reads MRKLQEEAKAKEEA. A B-3 repeat occupies 193-205; that stretch reads AKKLQEEIEAKEK. The stretch at 206-210 is one A-4 repeat; that stretch reads LEERK. An A-5 repeat occupies 211 to 215; it reads LEERR. One copy of the A-6 repeat lies at 216 to 220; that stretch reads LEERK. A helical transmembrane segment spans residues 322 to 342; the sequence is LMMNVGVAALVIFALGAYVSY. Residues 345-364 form a disordered region; that stretch reads CSSSSSSSSPSSSSSSTKPE. Residues 346–364 are compositionally biased toward low complexity; it reads SSSSSSSSPSSSSSSTKPE.

The protein belongs to the small heat shock protein (HSP20) family.

It localises to the cell membrane. Seems to not be involved in heat resistance. Unable to mediate restriction of long-distance movement of the pathogenic tobacco etch virus (TEV) without causing a hypersensitive response or inducing systemic acquired resistance. This is Inactive protein RESTRICTED TEV MOVEMENT 2 (RTM2) from Arabidopsis thaliana (Mouse-ear cress).